Consider the following 214-residue polypeptide: MQATVHESKQSIMQRILTVFVFTLLIATVGLFIGQFVPVALMLPLSILEVAMIILAFWMRRRKAVGYAFVYTFAFVSGITLFPIVSHYASIAGAYVVLEAFGSTFVIFAVLGTIGAKMKKDLSFLWSFLLVAVLALAVVGIFNIFSPLNSAAMMAYSVIGTIVFSLYILYDLNQIKHRHITEDLIPVMALSLYLDFINLFINLLRFFGILSSDD.

Topologically, residues 1 to 15 (MQATVHESKQSIMQR) are cytoplasmic. A helical membrane pass occupies residues 16–37 (ILTVFVFTLLIATVGLFIGQFV). Topologically, residues 38-44 (PVALMLP) are extracellular. The chain crosses the membrane as a helical span at residues 45–59 (LSILEVAMIILAFWM). The Cytoplasmic portion of the chain corresponds to 60 to 66 (RRRKAVG). Residues 67 to 86 (YAFVYTFAFVSGITLFPIVS) form a helical membrane-spanning segment. Residues 87–95 (HYASIAGAY) lie on the Extracellular side of the membrane. The helical transmembrane segment at 96 to 117 (VVLEAFGSTFVIFAVLGTIGAK) threads the bilayer. Residues 118–122 (MKKDL) lie on the Cytoplasmic side of the membrane. A helical transmembrane segment spans residues 123–146 (SFLWSFLLVAVLALAVVGIFNIFS). The Extracellular segment spans residues 147-151 (PLNSA). Residues 152 to 175 (AMMAYSVIGTIVFSLYILYDLNQI) form a helical membrane-spanning segment. Over 176 to 185 (KHRHITEDLI) the chain is Cytoplasmic. Residues 186 to 207 (PVMALSLYLDFINLFINLLRFF) traverse the membrane as a helical segment. Topologically, residues 208 to 214 (GILSSDD) are extracellular.

The protein belongs to the BI1 family. Monomer.

It localises to the cell membrane. It carries out the reaction Ca(2+)(in) = Ca(2+)(out). With respect to regulation, the calcium-release activity is mediated by two factors: pH and transmembrane ion gradient. It was proposed, based on an MD simulation, that the conserved aspartyl dyad (Asp-171-Asp-195) regulates Ca(2+) binding, pH sensing, and the channel pore opening and closing, and that protonation of Asp-171 probably weakens its interaction with Arg-60, facilitating the opening of the channel. Another study using nanodiscs suggests that Asp-171 is not a pH sensor regulating the pore dynamics; instead, it is only involved in the gating of calcium ions. When crystallized in detergents at different pH conditions, the transition between open and closed conformations is regulated by pH. Ca(2+) binding is inhibited by Na(+), K(+), Li(+), Yb(3+) and Lu(3+), but not by Mg(2+) and Mn(2+). Functionally, calcium channel that probably plays a role in the regulation of calcium homeostasis. Uptakes calcium ions and mediates calcium flux in proteoliposomes in a pH-dependent manner. When expressed in E.coli in the presence of high extracellular calcium concentrations, shows calcium-leak activity, increasing intracellular calcium concentration. It can also mediate Ca(2+) flux from the endoplamic reticulum (ER) when expressed in permeabilized mammalian cells. Calcium transport activity is also detected in ER-like lipid vesicles. This chain is pH-sensitive calcium channel, found in Bacillus subtilis (strain 168).